The following is a 456-amino-acid chain: UDP-N-acetylglucosamine 1-carboxyvinyltransferase (456 aa).

Residue 34-35 (KN) coordinates phosphoenolpyruvate. UDP-N-acetyl-alpha-D-glucosamine is bound at residue R104. C128 serves as the catalytic Proton donor. A 2-(S-cysteinyl)pyruvic acid O-phosphothioketal modification is found at C128. UDP-N-acetyl-alpha-D-glucosamine contacts are provided by D319 and I341.

Belongs to the EPSP synthase family. MurA subfamily.

Its subcellular location is the cytoplasm. The catalysed reaction is phosphoenolpyruvate + UDP-N-acetyl-alpha-D-glucosamine = UDP-N-acetyl-3-O-(1-carboxyvinyl)-alpha-D-glucosamine + phosphate. It functions in the pathway cell wall biogenesis; peptidoglycan biosynthesis. Functionally, cell wall formation. Adds enolpyruvyl to UDP-N-acetylglucosamine. In Prochlorococcus marinus (strain MIT 9301), this protein is UDP-N-acetylglucosamine 1-carboxyvinyltransferase.